Reading from the N-terminus, the 299-residue chain is GTPase Era (299 aa).

An Era-type G domain is found at 5–172 (KSGFVSIIGR…IDVLKTYLPE (168 aa)). Residues 13–20 (GRPNVGKS) are G1. 13–20 (GRPNVGKS) is a binding site for GTP. The tract at residues 39–43 (QTTRN) is G2. Residues 60 to 63 (DTPG) form a G3 region. GTP contacts are provided by residues 60–64 (DTPGI) and 122–125 (NKID). The interval 122-125 (NKID) is G4. The interval 151-153 (ISA) is G5. Positions 203 to 280 (TSEEIPHAIG…YLELWVKVQR (78 aa)) constitute a KH type-2 domain.

Belongs to the TRAFAC class TrmE-Era-EngA-EngB-Septin-like GTPase superfamily. Era GTPase family. As to quaternary structure, monomer.

It localises to the cytoplasm. Its subcellular location is the cell membrane. In terms of biological role, an essential GTPase that binds both GDP and GTP, with rapid nucleotide exchange. Plays a role in 16S rRNA processing and 30S ribosomal subunit biogenesis and possibly also in cell cycle regulation and energy metabolism. The chain is GTPase Era from Staphylococcus aureus (strain NCTC 8325 / PS 47).